Here is a 362-residue protein sequence, read N- to C-terminus: Beta-ketoacyl-[acyl-carrier-protein] synthase III 2 (362 aa).

Catalysis depends on residues cysteine 113 and histidine 251. Residues 252–256 (QANIR) form an ACP-binding region. The active site involves asparagine 281.

Belongs to the thiolase-like superfamily. FabH family. In terms of assembly, homodimer.

It is found in the cytoplasm. It carries out the reaction malonyl-[ACP] + acetyl-CoA + H(+) = 3-oxobutanoyl-[ACP] + CO2 + CoA. Its pathway is lipid metabolism; fatty acid biosynthesis. Its function is as follows. Catalyzes the condensation reaction of fatty acid synthesis by the addition to an acyl acceptor of two carbons from malonyl-ACP. Catalyzes the first condensation reaction which initiates fatty acid synthesis and may therefore play a role in governing the total rate of fatty acid production. Possesses both acetoacetyl-ACP synthase and acetyl transacylase activities. Its substrate specificity determines the biosynthesis of branched-chain and/or straight-chain of fatty acids. The protein is Beta-ketoacyl-[acyl-carrier-protein] synthase III 2 of Vibrio cholerae serotype O1 (strain ATCC 39315 / El Tor Inaba N16961).